Reading from the N-terminus, the 688-residue chain is Lipase (688 aa).

Residues 1–35 (MKTRQNKYSIRKFSVGASSILIAALLFMGGGSAQA) form the signal peptide. The disordered stretch occupies residues 31–309 (GSAQAAEQQQ…KSAKQKQYKN (279 aa)). The propeptide at 36-302 (AEQQQDKGTV…KNEDQTNKSA (267 aa)) is removed in mature form. Residues 45-54 (VENSTTQSIG) show a composition bias toward polar residues. Positions 68-79 (NKNVNEKSNVNS) are enriched in low complexity. 3 stretches are compositionally biased toward basic and acidic residues: residues 84-95 (ESLHNETPKNED), 103-117 (SQND…EQNK), and 126-143 (HSEE…KHAS). Residues 144–172 (ENNQTLHSKAAQSNEDVKTKPSQLDNTAA) are compositionally biased toward polar residues. Over residues 173-183 (KQEDSQKENLS) the composition is skewed to basic and acidic residues. Over residues 184-211 (KQDTQSSKTTDLLRATAQNQSKDSQSTE) the composition is skewed to polar residues. Over residues 240 to 267 (SKEEPLKVDKQANPTTDKDKSSKNDKGS) the composition is skewed to basic and acidic residues. Positions 274-289 (LESNAVATTNKQSKQQ) are enriched in polar residues. Ser418 functions as the Nucleophile in the catalytic mechanism. Asp609 functions as the Charge relay system in the catalytic mechanism. Asp647 contributes to the Ca(2+) binding site. The active-site Charge relay system is His648. Residues Asp650, Asp655, and Asp658 each contribute to the Ca(2+) site.

This sequence belongs to the AB hydrolase superfamily. Lipase family.

It is found in the secreted. The catalysed reaction is a triacylglycerol + H2O = a diacylglycerol + a fatty acid + H(+). In Staphylococcus epidermidis, this protein is Lipase (lip).